Reading from the N-terminus, the 581-residue chain is uncharacterized protein (581 aa).

Position 28 is a phosphoserine (serine 28). A run of 11 helical transmembrane segments spans residues 61–81 (LVLI…AGSA), 100–120 (AGVL…ATFL), 125–145 (CVYL…ALVK), 187–207 (IYIL…GYIA), 214–234 (WIGW…LFTF), 340–360 (IFLF…DAWL), 382–402 (AVAI…IYGG), 426–446 (LWLM…FGIG), 458–478 (VGLG…MAYL), 486–506 (VLEA…VFTF), and 522–542 (ISIG…ILCG).

The protein belongs to the major facilitator superfamily.

Its subcellular location is the cytoplasm. The protein localises to the cell cortex. The protein resides in the membrane. This is an uncharacterized protein from Schizosaccharomyces pombe (strain 972 / ATCC 24843) (Fission yeast).